A 493-amino-acid chain; its full sequence is Cysteine sulfinic acid decarboxylase (493 aa).

Lys-305 bears the N6-(pyridoxal phosphate)lysine mark.

This sequence belongs to the group II decarboxylase family. As to quaternary structure, homodimer. The cofactor is pyridoxal 5'-phosphate. In terms of tissue distribution, expressed in kidney and liver not detected in lymphoid tissues and lung. Expressed in kidney, liver and brain. 7 and 4 times higher expression in kidney and liver than in brain, respectively. Low level of detection in skeletal muscle. Expressed in brain, olfactory bulb, liver, skeletal muscle and kidney with the highest expression in liver and lowest in skeletal muscle (at protein level).

The enzyme catalyses L-aspartate + H(+) = beta-alanine + CO2. It carries out the reaction 3-sulfino-L-alanine + H(+) = hypotaurine + CO2. It catalyses the reaction L-cysteate + H(+) = taurine + CO2. Its pathway is organosulfur biosynthesis; taurine biosynthesis; hypotaurine from L-cysteine: step 2/2. With respect to regulation, activated by Mn(2+). Inhibited by bis-carboxymethyl-trithiocarbonate, ethylxanthogenacetic acid and 2,5-disulfoaniline. Not affected by Li(+) within 0.05-40 mM concentration range. Its function is as follows. Catalyzes the decarboxylation of L-aspartate, 3-sulfino-L-alanine (cysteine sulfinic acid), and L-cysteate to beta-alanine, hypotaurine and taurine, respectively. The preferred substrate is 3-sulfino-L-alanine. Does not exhibit any decarboxylation activity toward glutamate. This chain is Cysteine sulfinic acid decarboxylase, found in Mus musculus (Mouse).